Consider the following 622-residue polypeptide: Chromosomal replication initiator protein DnaA (622 aa).

The domain I, interacts with DnaA modulators stretch occupies residues 1–99 (MADVPADLAA…SAGEPPAPPA (99 aa)). Positions 88–282 (DDSAGEPPAP…APGPGEPHAR (195 aa)) are disordered. The tract at residues 100 to 281 (PPMHQSHQGP…PAPGPGEPHA (182 aa)) is domain II. 2 stretches are compositionally biased toward basic and acidic residues: residues 118 to 137 (QRDDAPRGDTYDGYGHRPSD) and 176 to 210 (GYQDREQPPGEPYRESEAYQRESEQYREQPPEPWR). Residues 250 to 262 (PGGHGPGRTGGSV) show a composition bias toward gly residues. Positions 282 to 498 (RLNPKYLFDT…GALIRVTAFA (217 aa)) are domain III, AAA+ region. ATP contacts are provided by G326, G328, K329, and T330. A domain IV, binds dsDNA region spans residues 499–622 (SLNRQPVDLG…TELTNRIKNG (124 aa)).

Belongs to the DnaA family. In terms of assembly, oligomerizes as a right-handed, spiral filament on DNA at oriC.

It is found in the cytoplasm. Its function is as follows. Plays an essential role in the initiation and regulation of chromosomal replication. ATP-DnaA binds to the origin of replication (oriC) to initiate formation of the DNA replication initiation complex once per cell cycle. Binds the DnaA box (a 9 base pair repeat at the origin) and separates the double-stranded (ds)DNA. Forms a right-handed helical filament on oriC DNA; dsDNA binds to the exterior of the filament while single-stranded (ss)DNA is stabiized in the filament's interior. The ATP-DnaA-oriC complex binds and stabilizes one strand of the AT-rich DNA unwinding element (DUE), permitting loading of DNA polymerase. After initiation quickly degrades to an ADP-DnaA complex that is not apt for DNA replication. Binds acidic phospholipids. The protein is Chromosomal replication initiator protein DnaA of Streptomyces griseus subsp. griseus (strain JCM 4626 / CBS 651.72 / NBRC 13350 / KCC S-0626 / ISP 5235).